A 388-amino-acid chain; its full sequence is Palmitoyltransferase ZDHHC18 (388 aa).

The segment at methionine 1 to arginine 67 is disordered. Topologically, residues methionine 1–histidine 90 are cytoplasmic. Positions serine 10–proline 27 are enriched in low complexity. At serine 19 the chain carries Phosphoserine. The segment covering alanine 28–proline 46 has biased composition (pro residues). A helical transmembrane segment spans residues glycine 91–phenylalanine 111. The Lumenal segment spans residues aspartate 112–lysine 119. Residues leucine 120–leucine 140 form a helical membrane-spanning segment. The Cytoplasmic segment spans residues glutamine 141–arginine 235. The 51-residue stretch at lysine 192–leucine 242 folds into the DHHC domain. Catalysis depends on cysteine 222, which acts as the S-palmitoyl cysteine intermediate. A helical transmembrane segment spans residues phenylalanine 236–valine 256. Residues threonine 257 to alanine 277 lie on the Lumenal side of the membrane. Residues serine 278 to phenylalanine 298 form a helical membrane-spanning segment. The Cytoplasmic portion of the chain corresponds to histidine 299 to proline 388. Residues leucine 364–proline 388 are disordered. Positions arginine 369–proline 379 are enriched in basic and acidic residues.

The protein belongs to the DHHC palmitoyltransferase family. ERF2/ZDHHC9 subfamily. Widely expressed.

It localises to the golgi apparatus membrane. It catalyses the reaction L-cysteinyl-[protein] + hexadecanoyl-CoA = S-hexadecanoyl-L-cysteinyl-[protein] + CoA. In terms of biological role, palmitoyltransferase that catalyzes the addition of palmitate onto various protein substrates, such as CGAS, HRAS and LCK. Acts as a negative regulator of the cGAS-STING pathway be mediating palmitoylation and inactivation of CGAS. May also have a palmitoyltransferase activity toward the beta-2 adrenergic receptor/ADRB2 and therefore regulate G protein-coupled receptor signaling. In Homo sapiens (Human), this protein is Palmitoyltransferase ZDHHC18.